The following is a 193-amino-acid chain: Rho-related GTP-binding protein RhoA-D (193 aa).

GTP contacts are provided by residues 12-19, 30-37, 59-63, 117-120, and 160-162; these read GDGACGKT, FPEVYVPT, DTAGQ, NKKD, and SAK. A (Microbial infection) O-linked (GlcNAc) tyrosine; by Yersinia Afp18 glycan is attached at Tyr-34. At Cys-190 the chain carries Cysteine methyl ester. A lipid anchor (S-geranylgeranyl cysteine) is attached at Cys-190. Residues 191 to 193 constitute a propeptide, removed in mature form; that stretch reads LLL.

The protein belongs to the small GTPase superfamily. Rho family. (Microbial infection) Glycosylated at Tyr-34 by Yersinia ruckeri toxin Afp18. Mono-O-GlcNAcylation by Afp18 inhibits RhoA activation by guanine nucleotide exchange factors and blocks RhoA signaling.

Its subcellular location is the cell membrane. Regulates a signal transduction pathway linking plasma membrane receptors to the assembly of focal adhesions and actin stress fibers. In Danio rerio (Zebrafish), this protein is Rho-related GTP-binding protein RhoA-D.